The primary structure comprises 89 residues: Mapacalcine (89 aa).

Glutamine amide is present on glutamine 89.

Homodimer. In terms of processing, contains disulfide bonds which may also be involved in dimerization.

Functionally, blocks calcium currents via interaction with a yet unknown target protein. Has no effect on L-type, T-type, N-type or P/Q-type voltage-gated calcium channels (VGCC). Has no effect on voltage-gated potassium or chloride channels. Blocks non-L-type VGCC calcium currents in mouse duodenal myocytes (IC(50)=0.2 uM). Blocks calcium influx induced by hypoxia/reoxygenation in rat hepatocytes. In Pione vastifica (Boring sponge), this protein is Mapacalcine.